A 176-amino-acid polypeptide reads, in one-letter code: Nucleoside triphosphate/diphosphate phosphatase (176 aa).

The active-site Proton donor is the arginine 23. The Mg(2+) site is built by asparagine 87, aspartate 103, aspartate 105, aspartate 107, aspartate 120, and glutamate 123.

It belongs to the Ntdp family. The cofactor is Mg(2+).

It catalyses the reaction a ribonucleoside 5'-triphosphate + H2O = a ribonucleoside 5'-diphosphate + phosphate + H(+). It carries out the reaction a ribonucleoside 5'-diphosphate + H2O = a ribonucleoside 5'-phosphate + phosphate + H(+). Its function is as follows. Has nucleoside phosphatase activity towards nucleoside triphosphates and nucleoside diphosphates. This is Nucleoside triphosphate/diphosphate phosphatase from Bacillus cereus (strain G9842).